An 826-amino-acid chain; its full sequence is MDESALLDLLECPVCLERLDASAKVLPCQHTFCKRCLLGIVSSRKELRCPECRTLVECGVDELPSNILLVRLLDGIRQRPRKAGDGGSAGNSTNALRAQGSVTTNGGLNDAQNTQSGQQRIQARSPPVRGVPQLPCAKALYNYEGKEPGDLKFNKGDIIVLRRQVDENWYHGEINGIHGFFPTNFVQIIKPLPQPPPQCKALYDFEVKDKEADKDCLPFLKDDILTVIRRVDENWAEGMLGDKIGIFPISYVEFNSAAKQLIELDKPSGADTGEGSSGTSHSGNSQKQADAKKNTKKRHSFTSLTMSNKSSQSVQNRHSMEISPPVLISSSNPTAAARISELTGLSCSAPSQDMNPPLLPPPPMATPVITSASSGAAAVAQRNIIGPVEQVPHLRTSARPSVFIAIYPYIPRKEDELELRKGEMFLVFERCQDGWFKGTSMHTSKIGVFPGNYVAPVTRALTTATPAKVAMATATTSNVVNLVTPTPPGAPCQKLPVSGVEFAKTSSTNGVSPAGVPGCHIQTSPQSKVLLHMSGQMTVNQARNAVRTAAAHSQDRPTAAVTPIQAQTPAASALPQQAAASQQVPPPLSAPAAYINAAMNISRPSVPAASAASSALPTAAFEAESSWKSSSGLSGCSFSENVSAPLNSAANKQDKDSKKEKKGLLKLLSGASTKRKPRSSPPHSPTQEVEQTNSEAAAALEGAVGPDIVPVIVNGRAAPCTVDCDSVSASTPAQDNRKPASLDNNIPIAPPPRQPCSSLGSVLNDSRPCERYRVMVSYPPQSEAELELKEGDIVFVHKKREDGWFKGTLQRNGKTGLFPGSFVENI.

An RING-type zinc finger spans residues 12–53; that stretch reads CPVCLERLDASAKVLPCQHTFCKRCLLGIVSSRKELRCPECR. Positions 80-130 are disordered; it reads PRKAGDGGSAGNSTNALRAQGSVTTNGGLNDAQNTQSGQQRIQARSPPVRG. Polar residues predominate over residues 90 to 122; that stretch reads GNSTNALRAQGSVTTNGGLNDAQNTQSGQQRIQ. 2 consecutive SH3 domains span residues 132-191 and 194-257; these read PQLP…IIKP and QPPP…FNSA. The disordered stretch occupies residues 266 to 319; the sequence is KPSGADTGEGSSGTSHSGNSQKQADAKKNTKKRHSFTSLTMSNKSSQSVQNRHS. Positions 273–285 are enriched in low complexity; sequence GEGSSGTSHSGNS. The segment covering 301–317 has biased composition (polar residues); sequence FTSLTMSNKSSQSVQNR. The 62-residue stretch at 398 to 459 folds into the SH3 3 domain; it reads ARPSVFIAIY…PGNYVAPVTR (62 aa). Disordered stretches follow at residues 647-694 and 725-759; these read NSAA…QTNS and DSVS…CSSL. Residues 652 to 663 show a composition bias toward basic and acidic residues; it reads KQDKDSKKEKKG. In terms of domain architecture, SH3 4 spans 767–826; that stretch reads RPCERYRVMVSYPPQSEAELELKEGDIVFVHKKREDGWFKGTLQRNGKTGLFPGSFVENI.

Belongs to the SH3RF family. Autoubiquitinated. Ubiquitinated by SH3RF2, leading to proteasome-mediated degradation.

It is found in the cytoplasm. The protein localises to the perinuclear region. The protein resides in the cell projection. Its subcellular location is the lamellipodium. It localises to the golgi apparatus. It is found in the trans-Golgi network. The enzyme catalyses S-ubiquitinyl-[E2 ubiquitin-conjugating enzyme]-L-cysteine + [acceptor protein]-L-lysine = [E2 ubiquitin-conjugating enzyme]-L-cysteine + N(6)-ubiquitinyl-[acceptor protein]-L-lysine.. It functions in the pathway protein modification; protein ubiquitination. Has E3 ubiquitin-protein ligase activity. In the absence of an external substrate, it can catalyze self-ubiquitination. Acts as a scaffold protein that contributes to the effective activation of the JNK signaling pathway. Plays an essential role in the anterior neural development. This Xenopus laevis (African clawed frog) protein is E3 ubiquitin-protein ligase SH3RF1 (sh3rf1).